A 273-amino-acid polypeptide reads, in one-letter code: MHAASREALARVTSDLDKALWEAKENAIATAAHTGAELFDVVEVLDGDRALRVAVADSAKSAEDRAGLVSAVFAGKVSPATLEVLVTSARELWSNPREFRDGLVTLGRRALLRSAEGQGQLGQVEDELFRLSRILDKEPELTLLLDDRSTDGAKKRELLAKVLYGKVTAVTEALALQVIGRRESNAIDDIDALSKEAAALQGHSVAHVVSAGRLNDEQNQALAQKLERIYGRAMSIHSEVDPSLLGGLVIRVGDEVIDGSTSGKLERLRANLA.

This sequence belongs to the ATPase delta chain family. F-type ATPases have 2 components, F(1) - the catalytic core - and F(0) - the membrane proton channel. F(1) has five subunits: alpha(3), beta(3), gamma(1), delta(1), epsilon(1). F(0) has three main subunits: a(1), b(2) and c(10-14). The alpha and beta chains form an alternating ring which encloses part of the gamma chain. F(1) is attached to F(0) by a central stalk formed by the gamma and epsilon chains, while a peripheral stalk is formed by the delta and b chains.

It localises to the cell membrane. F(1)F(0) ATP synthase produces ATP from ADP in the presence of a proton or sodium gradient. F-type ATPases consist of two structural domains, F(1) containing the extramembraneous catalytic core and F(0) containing the membrane proton channel, linked together by a central stalk and a peripheral stalk. During catalysis, ATP synthesis in the catalytic domain of F(1) is coupled via a rotary mechanism of the central stalk subunits to proton translocation. Functionally, this protein is part of the stalk that links CF(0) to CF(1). It either transmits conformational changes from CF(0) to CF(1) or is implicated in proton conduction. This Corynebacterium diphtheriae (strain ATCC 700971 / NCTC 13129 / Biotype gravis) protein is ATP synthase subunit delta.